The primary structure comprises 259 residues: 4-hydroxy-tetrahydrodipicolinate reductase (259 aa).

Residues 8–13, 94–96, and 120–123 each bind NAD(+); these read GFAGAM, GTT, and APNF. His150 acts as the Proton donor/acceptor in catalysis. A (S)-2,3,4,5-tetrahydrodipicolinate-binding site is contributed by His151. The active-site Proton donor is the Lys154. (S)-2,3,4,5-tetrahydrodipicolinate is bound at residue 160–161; sequence GT.

This sequence belongs to the DapB family.

It localises to the cytoplasm. The catalysed reaction is (S)-2,3,4,5-tetrahydrodipicolinate + NAD(+) + H2O = (2S,4S)-4-hydroxy-2,3,4,5-tetrahydrodipicolinate + NADH + H(+). It carries out the reaction (S)-2,3,4,5-tetrahydrodipicolinate + NADP(+) + H2O = (2S,4S)-4-hydroxy-2,3,4,5-tetrahydrodipicolinate + NADPH + H(+). Its pathway is amino-acid biosynthesis; L-lysine biosynthesis via DAP pathway; (S)-tetrahydrodipicolinate from L-aspartate: step 4/4. Its function is as follows. Catalyzes the conversion of 4-hydroxy-tetrahydrodipicolinate (HTPA) to tetrahydrodipicolinate. The polypeptide is 4-hydroxy-tetrahydrodipicolinate reductase (Limosilactobacillus fermentum (strain NBRC 3956 / LMG 18251) (Lactobacillus fermentum)).